The primary structure comprises 271 residues: Membrane protein insertase YidC 1 (271 aa).

Residues 1-20 form the signal peptide; the sequence is MKKKLKTFSLILLTGSLLVA. The N-palmitoyl cysteine moiety is linked to residue C21. Residue C21 is the site of S-diacylglycerol cysteine attachment. 4 helical membrane passes run 45 to 65, 124 to 144, 163 to 183, and 201 to 221; these read IQWLSFNHSIGLGIILFTLII, YASVLPLLIQLPVLWALFQAL, PDPYYILPVLAALFTFLSTWL, and VMPFIILVTSFNFASGVVLYW.

The protein belongs to the OXA1/ALB3/YidC family. Type 2 subfamily.

It localises to the cell membrane. Its function is as follows. Required for the insertion and/or proper folding and/or complex formation of integral membrane proteins into the membrane. Involved in integration of membrane proteins that insert both dependently and independently of the Sec translocase complex, as well as at least some lipoproteins. The sequence is that of Membrane protein insertase YidC 1 from Streptococcus agalactiae serotype III (strain NEM316).